Consider the following 465-residue polypeptide: Ubiquitin carboxyl-terminal hydrolase UCH54 (465 aa).

Residues 11–333 (EWCLIESNPC…VRFNIIAVMK (323 aa)) enclose the UCH catalytic domain. Cysteine 145 acts as the Nucleophile in catalysis. The active-site Proton donor is the histidine 220. The interval 244-293 (INADEQNKPNPNNNNNNKDNDNDNNNNNNNNNNNNNNNNNNNNNNNNNNI) is disordered. The segment covering 251 to 292 (KPNPNNNNNNKDNDNDNNNNNNNNNNNNNNNNNNNNNNNNNN) has biased composition (low complexity). The region spanning 432-460 (NFYPFIMSSLNLMAKHKLLKDAYQKEKLK) is the ULD domain.

The protein belongs to the peptidase C12 family.

It carries out the reaction Thiol-dependent hydrolysis of ester, thioester, amide, peptide and isopeptide bonds formed by the C-terminal Gly of ubiquitin (a 76-residue protein attached to proteins as an intracellular targeting signal).. Its function is as follows. Thiol protease that recognizes and hydrolyzes a peptide bond at the C-terminal glycine of either ubiquitin or NEDD8. This chain is Ubiquitin carboxyl-terminal hydrolase UCH54, found in Plasmodium falciparum (isolate 3D7).